The following is a 200-amino-acid chain: Lipid A acyltransferase PagP (200 aa).

The first 24 residues, 1–24, serve as a signal peptide directing secretion; that stretch reads MRLKLTSHTCLFALSSLLVTPAFA. Residues His72, Asp115, and Ser116 contribute to the active site.

It belongs to the lipid A palmitoyltransferase family. As to quaternary structure, homodimer.

It is found in the cell outer membrane. The enzyme catalyses a lipid A + a 1,2-diacyl-sn-glycero-3-phosphocholine = a hepta-acyl lipid A + a 2-acyl-sn-glycero-3-phosphocholine. The catalysed reaction is a lipid IVA + a 1,2-diacyl-sn-glycero-3-phosphocholine = a lipid IVB + a 2-acyl-sn-glycero-3-phosphocholine. It catalyses the reaction a lipid IIA + a 1,2-diacyl-sn-glycero-3-phosphocholine = a lipid IIB + a 2-acyl-sn-glycero-3-phosphocholine. Its function is as follows. Transfers a fatty acid residue from the sn-1 position of a phospholipid to the N-linked hydroxyfatty acid chain on the proximal unit of lipid A or its precursors. This chain is Lipid A acyltransferase PagP, found in Dickeya dadantii (strain 3937) (Erwinia chrysanthemi (strain 3937)).